We begin with the raw amino-acid sequence, 376 residues long: Methionine import ATP-binding protein MetN 1 (376 aa).

Positions 34-273 constitute an ABC transporter domain; it reads VRFINLGKTY…PQHEVSKTLL (240 aa). 70-77 contacts ATP; sequence GRSGAGKS.

Belongs to the ABC transporter superfamily. Methionine importer (TC 3.A.1.24) family. As to quaternary structure, the complex is composed of two ATP-binding proteins (MetN), two transmembrane proteins (MetI) and a solute-binding protein (MetQ).

The protein localises to the cell inner membrane. It catalyses the reaction L-methionine(out) + ATP + H2O = L-methionine(in) + ADP + phosphate + H(+). The enzyme catalyses D-methionine(out) + ATP + H2O = D-methionine(in) + ADP + phosphate + H(+). Part of the ABC transporter complex MetNIQ involved in methionine import. Responsible for energy coupling to the transport system. The sequence is that of Methionine import ATP-binding protein MetN 1 from Pseudomonas syringae pv. tomato (strain ATCC BAA-871 / DC3000).